Here is a 172-residue protein sequence, read N- to C-terminus: Signal peptidase complex catalytic subunit SEC11 (172 aa).

The Cytoplasmic segment spans residues 1–14 (MLSSLQNPRQAAAQ). Residues 15-35 (LMNFGLILSTAFMMWKGLSVI) form a helical; Signal-anchor for type II membrane protein membrane-spanning segment. The Lumenal segment spans residues 36–172 (TDSPSPIVVV…MGLVVVLQRE (137 aa)). Catalysis depends on charge relay system residues Ser-49, His-90, and Asp-115. Residues 158–169 (VMLGIMGLVVVL) form a C-terminal short (CTS) helix region.

This sequence belongs to the peptidase S26B family. In terms of assembly, component of the signal peptidase complex (SPC) composed of a catalytic subunit SEC11 and three accessory subunits SPC1, SPC2 and SPC3. The complex induces a local thinning of the ER membrane which is used to measure the length of the signal peptide (SP) h-region of protein substrates. This ensures the selectivity of the complex towards h-regions shorter than 18-20 amino acids. SPC associates with the translocon complex.

Its subcellular location is the endoplasmic reticulum membrane. The enzyme catalyses Cleavage of hydrophobic, N-terminal signal or leader sequences from secreted and periplasmic proteins.. Functionally, catalytic component of the signal peptidase complex (SPC) which catalyzes the cleavage of N-terminal signal sequences from nascent proteins as they are translocated into the lumen of the endoplasmic reticulum. Specifically cleaves N-terminal signal peptides that contain a hydrophobic alpha-helix (h-region) shorter than 18-20 amino acids. The protein is Signal peptidase complex catalytic subunit SEC11 (SEC11) of Chaetomium globosum (strain ATCC 6205 / CBS 148.51 / DSM 1962 / NBRC 6347 / NRRL 1970) (Soil fungus).